The sequence spans 355 residues: UDP-N-acetylglucosamine--N-acetylmuramyl-(pentapeptide) pyrophosphoryl-undecaprenol N-acetylglucosamine transferase (355 aa).

Residues 13–15 (TGG), Asn-125, Arg-162, Ser-190, Ile-244, and Gln-289 each bind UDP-N-acetyl-alpha-D-glucosamine.

The protein belongs to the glycosyltransferase 28 family. MurG subfamily.

It is found in the cell inner membrane. It carries out the reaction di-trans,octa-cis-undecaprenyl diphospho-N-acetyl-alpha-D-muramoyl-L-alanyl-D-glutamyl-meso-2,6-diaminopimeloyl-D-alanyl-D-alanine + UDP-N-acetyl-alpha-D-glucosamine = di-trans,octa-cis-undecaprenyl diphospho-[N-acetyl-alpha-D-glucosaminyl-(1-&gt;4)]-N-acetyl-alpha-D-muramoyl-L-alanyl-D-glutamyl-meso-2,6-diaminopimeloyl-D-alanyl-D-alanine + UDP + H(+). It participates in cell wall biogenesis; peptidoglycan biosynthesis. In terms of biological role, cell wall formation. Catalyzes the transfer of a GlcNAc subunit on undecaprenyl-pyrophosphoryl-MurNAc-pentapeptide (lipid intermediate I) to form undecaprenyl-pyrophosphoryl-MurNAc-(pentapeptide)GlcNAc (lipid intermediate II). This Neisseria meningitidis serogroup B (strain ATCC BAA-335 / MC58) protein is UDP-N-acetylglucosamine--N-acetylmuramyl-(pentapeptide) pyrophosphoryl-undecaprenol N-acetylglucosamine transferase.